We begin with the raw amino-acid sequence, 114 residues long: MINVYDTANQLEKDLRESQEYKDLQAVVAKVKADDATFAVYKKLREAQKTLQEQQMQGTLDEKVMKSLQEISQEASQYPLMMELMEKERAISVLIDDLNKIIFKPLSEVYDIEG.

Belongs to the UPF0342 family.

This chain is UPF0342 protein LSL_0473, found in Ligilactobacillus salivarius (strain UCC118) (Lactobacillus salivarius).